The primary structure comprises 339 residues: SVP1-like protein 2 (339 aa).

2 WD repeats span residues 177–217 (AHAN…LVRE) and 222–261 (LDRT…ENKR).

The protein belongs to the WD repeat PROPPIN family.

The protein localises to the vacuole membrane. It is found in the cytoplasmic vesicle membrane. In terms of biological role, involved in mitochondrial or peroxisomal functions and amino acid signaling pathways. This chain is SVP1-like protein 2 (HSV2), found in Kluyveromyces lactis (strain ATCC 8585 / CBS 2359 / DSM 70799 / NBRC 1267 / NRRL Y-1140 / WM37) (Yeast).